A 252-amino-acid polypeptide reads, in one-letter code: MKITPVKALTDNYIWMIQHGNHAVCVDPSEPSPVLEFLVRNRLMLAQTWVTHPHPDHEGGAAALWRGYMESPVYGESDIEAATHTVTAGTQFTFGDGQVTVWATPGHTDRHTSYLLETSDGIHVFCGDTLFSAGCGRVFTGTIEQLYDSFQRFNRLPENTLFYPAHEYTAANLDFAAHIEPDNADIQTALKAAAHTPTLPVTLAHERRVNPFLRVDLPHVRDRAEALSGKTLNSSLDTFVALRELKNQYRTK.

Residues H52, H54, D56, H57, H107, D128, and H166 each contribute to the Zn(2+) site.

The protein belongs to the metallo-beta-lactamase superfamily. Glyoxalase II family. As to quaternary structure, monomer. The cofactor is Zn(2+).

It carries out the reaction an S-(2-hydroxyacyl)glutathione + H2O = a 2-hydroxy carboxylate + glutathione + H(+). It participates in secondary metabolite metabolism; methylglyoxal degradation; (R)-lactate from methylglyoxal: step 2/2. Thiolesterase that catalyzes the hydrolysis of S-D-lactoyl-glutathione to form glutathione and D-lactic acid. This is Hydroxyacylglutathione hydrolase from Neisseria meningitidis serogroup C / serotype 2a (strain ATCC 700532 / DSM 15464 / FAM18).